Consider the following 183-residue polypeptide: MHLLPELASHHAVSIPELLVSRDERQARQHVWLKRHPVPLVSFTVVAPGPIKDCEVTRRIFNHGVTALRALAAKQGWQIQEQAALVSASGPEGMLSIAAPARDLKLATIELEHSHPLGRLWDIDVLTPEGEILSRRDYSLPPRRCLLCEQSAAVCARGKTHQLTDLLNRMEALLNDVDACNVN.

Belongs to the CitX family.

It carries out the reaction apo-[citrate lyase ACP] + 2'-(5''-triphospho-alpha-D-ribosyl)-3'-dephospho-CoA = holo-[citrate lyase ACP] + diphosphate. In terms of biological role, transfers 2-(5''-triphosphoribosyl)-3'-dephosphocoenzyme-A on a serine residue to the apo-acyl carrier protein (gamma chain) of the citrate lyase to yield holo-acyl carrier protein. The protein is Apo-citrate lyase phosphoribosyl-dephospho-CoA transferase of Escherichia coli O9:H4 (strain HS).